The chain runs to 656 residues: MSLLLKMLLFSLFFFYMASISQCSDPTGGQFSFNGYLYTDGVADLNPDGLFKLITSKTQGGAGQVLYQFPLQFKNSPNGTVSSFSTTFVFAIVAVRKTIAGCGLSFNISPTKGLNSVPNIDHSNHSVSVGFHTAKSDKPDGEDVNLVGINIDSSKMDRNCSAGYYKDDGRLVNLDIASGKPIQVWIEYNNSTKQLDVTMHSIKISKPKIPLLSMRKDLSPYLHEYMYIGFTSVGSPTSSHYILGWSFNNKGAVSDINLSRLPKVPDEDQERSLSSKILAISLSISGVTLVIVLILGVMLFLKRKKFLEVIEDWEVQFGPHKFTYKDLFIATKGFKNSEVLGKGGFGKVFKGILPLSSIPIAVKKISHDSRQGMREFLAEIATIGRLRHPDLVRLLGYCRRKGELYLVYDFMPKGSLDKFLYNQPNQILDWSQRFNIIKDVASGLCYLHQQWVQVIIHRDIKPANILLDENMNAKLGDFGLAKLCDHGIDSQTSNVAGTFGYISPELSRTGKSSTSSDVFAFGVFMLEITCGRRPIGPRGSPSEMVLTDWVLDCWDSGDILQVVDEKLGHRYLAEQVTLVLKLGLLCSHPVAATRPSMSSVIQFLDGVATLPHNLLDLVNSRIINEGFDTLGVTTESMEASSNVSLVMTESFLSSGR.

The N-terminal stretch at 1–23 (MSLLLKMLLFSLFFFYMASISQC) is a signal peptide. Residues 24 to 276 (SDPTGGQFSF…EDQERSLSSK (253 aa)) are Extracellular-facing. Residues 29–248 (GQFSFNGYLY…SHYILGWSFN (220 aa)) are legume-lectin like. Asn78, Asn124, Asn159, Asn190, and Asn257 each carry an N-linked (GlcNAc...) asparagine glycan. The helical transmembrane segment at 277 to 297 (ILAISLSISGVTLVIVLILGV) threads the bilayer. Over 298–656 (MLFLKRKKFL…MTESFLSSGR (359 aa)) the chain is Cytoplasmic. One can recognise a Protein kinase domain in the interval 334-615 (FKNSEVLGKG…GVATLPHNLL (282 aa)). ATP contacts are provided by residues 340-348 (LGKGGFGKV) and Lys363. Residue Asp459 is the Proton acceptor of the active site.

In the C-terminal section; belongs to the protein kinase superfamily. Ser/Thr protein kinase family. This sequence in the N-terminal section; belongs to the leguminous lectin family.

It localises to the cell membrane. It carries out the reaction L-seryl-[protein] + ATP = O-phospho-L-seryl-[protein] + ADP + H(+). The catalysed reaction is L-threonyl-[protein] + ATP = O-phospho-L-threonyl-[protein] + ADP + H(+). The chain is Putative L-type lectin-domain containing receptor kinase V.2 (LECRK52) from Arabidopsis thaliana (Mouse-ear cress).